We begin with the raw amino-acid sequence, 200 residues long: Holliday junction branch migration complex subunit RuvA (200 aa).

The interval 1–64 (MIGRIVGTLI…EDSHTLYGFI (64 aa)) is domain I. A domain II region spans residues 65 to 143 (DKNERALFRV…QAAKTDLFSA (79 aa)). Residues 144 to 149 (PAVLRQ) are flexible linker. Residues 150–200 (VQADPRQEAEAALISLGYKPQEAAKAIAGVPVDAANSEDVIKAALKGMLRK) form a domain III region.

This sequence belongs to the RuvA family. As to quaternary structure, homotetramer. Forms an RuvA(8)-RuvB(12)-Holliday junction (HJ) complex. HJ DNA is sandwiched between 2 RuvA tetramers; dsDNA enters through RuvA and exits via RuvB. An RuvB hexamer assembles on each DNA strand where it exits the tetramer. Each RuvB hexamer is contacted by two RuvA subunits (via domain III) on 2 adjacent RuvB subunits; this complex drives branch migration. In the full resolvosome a probable DNA-RuvA(4)-RuvB(12)-RuvC(2) complex forms which resolves the HJ.

Its subcellular location is the cytoplasm. Its function is as follows. The RuvA-RuvB-RuvC complex processes Holliday junction (HJ) DNA during genetic recombination and DNA repair, while the RuvA-RuvB complex plays an important role in the rescue of blocked DNA replication forks via replication fork reversal (RFR). RuvA specifically binds to HJ cruciform DNA, conferring on it an open structure. The RuvB hexamer acts as an ATP-dependent pump, pulling dsDNA into and through the RuvAB complex. HJ branch migration allows RuvC to scan DNA until it finds its consensus sequence, where it cleaves and resolves the cruciform DNA. The polypeptide is Holliday junction branch migration complex subunit RuvA (Marinomonas sp. (strain MWYL1)).